A 459-amino-acid polypeptide reads, in one-letter code: Bifunctional protein GlmU (459 aa).

The interval 1–229 (MSNFAIILAA…FDESLGVNDR (229 aa)) is pyrophosphorylase. Residues 8-11 (LAAG), K22, Q72, and 77-78 (GT) contribute to the UDP-N-acetyl-alpha-D-glucosamine site. Mg(2+) is bound at residue D102. UDP-N-acetyl-alpha-D-glucosamine contacts are provided by G139, E154, N169, and N227. Position 227 (N227) interacts with Mg(2+). Residues 230-250 (VALATAESVMRRRINHKHMVN) form a linker region. The tract at residues 251–459 (GVSFVNPEAT…TRLPHHPKNQ (209 aa)) is N-acetyltransferase. UDP-N-acetyl-alpha-D-glucosamine contacts are provided by R332 and K350. H362 (proton acceptor) is an active-site residue. The UDP-N-acetyl-alpha-D-glucosamine site is built by Y365 and N376. Acetyl-CoA is bound by residues A379, 385–386 (NY), S404, A422, and R439.

The protein in the N-terminal section; belongs to the N-acetylglucosamine-1-phosphate uridyltransferase family. In the C-terminal section; belongs to the transferase hexapeptide repeat family. As to quaternary structure, homotrimer. It depends on Mg(2+) as a cofactor.

The protein resides in the cytoplasm. The enzyme catalyses alpha-D-glucosamine 1-phosphate + acetyl-CoA = N-acetyl-alpha-D-glucosamine 1-phosphate + CoA + H(+). It carries out the reaction N-acetyl-alpha-D-glucosamine 1-phosphate + UTP + H(+) = UDP-N-acetyl-alpha-D-glucosamine + diphosphate. It participates in nucleotide-sugar biosynthesis; UDP-N-acetyl-alpha-D-glucosamine biosynthesis; N-acetyl-alpha-D-glucosamine 1-phosphate from alpha-D-glucosamine 6-phosphate (route II): step 2/2. It functions in the pathway nucleotide-sugar biosynthesis; UDP-N-acetyl-alpha-D-glucosamine biosynthesis; UDP-N-acetyl-alpha-D-glucosamine from N-acetyl-alpha-D-glucosamine 1-phosphate: step 1/1. Its pathway is bacterial outer membrane biogenesis; LPS lipid A biosynthesis. In terms of biological role, catalyzes the last two sequential reactions in the de novo biosynthetic pathway for UDP-N-acetylglucosamine (UDP-GlcNAc). The C-terminal domain catalyzes the transfer of acetyl group from acetyl coenzyme A to glucosamine-1-phosphate (GlcN-1-P) to produce N-acetylglucosamine-1-phosphate (GlcNAc-1-P), which is converted into UDP-GlcNAc by the transfer of uridine 5-monophosphate (from uridine 5-triphosphate), a reaction catalyzed by the N-terminal domain. This Streptococcus pneumoniae serotype 2 (strain D39 / NCTC 7466) protein is Bifunctional protein GlmU.